A 375-amino-acid polypeptide reads, in one-letter code: Actin-related protein T1 (375 aa).

It belongs to the actin family.

It is found in the cytoplasm. Its subcellular location is the cytoskeleton. The protein localises to the nucleus. It localises to the cytoplasmic vesicle. The protein resides in the secretory vesicle. It is found in the acrosome. Its function is as follows. Negatively regulates the Hedgehog (SHH) signaling. Binds to the promoter of the SHH signaling mediator, GLI1, and inhibits its expression. The sequence is that of Actin-related protein T1 (ACTRT1) from Macaca fascicularis (Crab-eating macaque).